The sequence spans 170 residues: Cytidine diphosphoramidate kinase (170 aa).

The protein belongs to the APS kinase family.

The catalysed reaction is cytidine 5'-diphosphoramidate + ATP = cytidine 3'-phospho-5'-diphosphoramidate + ADP + H(+). It participates in capsule biogenesis; capsule polysaccharide biosynthesis. Its function is as follows. Involved in the biosynthesis of the O-methyl phosphoramidate (MeOPN) group found on the capsular polysaccharide (CPS) of C.jejuni. Catalyzes the ATP-dependent phosphorylation of cytidine diphosphoramidate (CDP-NH(2)) to form cytidine 3'-phosphate 5'-diphosphoramidate. Can also use other substrates such as the corresponding adenine and uridine diphosphoramidate derivatives or cytidine diphosphoramidate analogs, with lower efficiency. This is Cytidine diphosphoramidate kinase from Campylobacter jejuni subsp. jejuni serotype O:2 (strain ATCC 700819 / NCTC 11168).